Consider the following 343-residue polypeptide: MIKLSNITKVFHQGTRTIQALNNVSLHVPAGQIYGVIGASGAGKSTLIRCVNLLERPTEGSVLVDGQELTTLSESELTKARRQIGMIFQHFNLLSSRTVFGNVALPLELDNTPKDEVKRRVTELLSLVGLGDKHDSYPSNLSGGQKQRVAIARALASNPKVLLCDEATSALDPATTRSILELLKDINRRLGLTILLITHEMDVVKRICDCVAVISNGELIEQDTVSEVFSHPKTPLAQKFIQSTLHLDIPEDYQERLQAEPFTDCVPMLRLEFTGQSVDAPLLSETARRFNVNNNIISAQMDYAGGVKFGIMLTEMHGTQQDTQAAIAWLQEHHVKVEVLGYV.

The 240-residue stretch at 2 to 241 (IKLSNITKVF…PKTPLAQKFI (240 aa)) folds into the ABC transporter domain. An ATP-binding site is contributed by 40-46 (SGAGKST). A C2 domain region spans residues 265–343 (CVPMLRLEFT…HVKVEVLGYV (79 aa)). L-methionine-binding positions include 278-283 (VDAPLL) and 295-296 (NI).

Belongs to the ABC transporter superfamily. Methionine importer (TC 3.A.1.24) family. In terms of assembly, the complex is composed of two ATP-binding proteins (MetN), two transmembrane proteins (MetI) and a solute-binding protein (MetQ).

Its subcellular location is the cell inner membrane. The catalysed reaction is L-methionine(out) + ATP + H2O = L-methionine(in) + ADP + phosphate + H(+). The enzyme catalyses D-methionine(out) + ATP + H2O = D-methionine(in) + ADP + phosphate + H(+). Its activity is regulated as follows. ATPase activity is inhibited by intracellular L-methionine. Binding of methionine to the dimerized C-terminal regulatory domain stabilizes an inward-facing, ATPase-inactive conformation of the transporter, and as a consequence, the rate of ATP hydrolysis decreases. ADP is a competitive inhibitor. Functionally, part of the ABC transporter complex MetNIQ involved in methionine import. Responsible for energy coupling to the transport system. It has also been shown to be involved in formyl-L-methionine transport. The polypeptide is Methionine import ATP-binding protein MetN (Escherichia coli (strain K12)).